Here is a 245-residue protein sequence, read N- to C-terminus: Probable phosphatase KPK_3500 (245 aa).

9 residues coordinate Zn(2+): histidine 7, histidine 9, histidine 15, histidine 40, glutamate 73, histidine 101, histidine 131, aspartate 192, and histidine 194.

This sequence belongs to the PHP family. As to quaternary structure, homotrimer. The cofactor is Zn(2+).

The protein is Probable phosphatase KPK_3500 of Klebsiella pneumoniae (strain 342).